The sequence spans 91 residues: UPF0298 protein M28_Spy0318 (91 aa).

The protein belongs to the UPF0298 family.

It localises to the cytoplasm. The protein is UPF0298 protein M28_Spy0318 of Streptococcus pyogenes serotype M28 (strain MGAS6180).